Consider the following 480-residue polypeptide: Chromosomal replication initiator protein DnaA (480 aa).

The tract at residues 1–71 (MRHDALFERV…TTLVQQEDSE (71 aa)) is domain I, interacts with DnaA modulators. The tract at residues 71-137 (EILKVEILVR…RPVQAPLFGS (67 aa)) is domain II. Residues 138–360 (PLDQRYGFDS…GAFNQLLFRR (223 aa)) are domain III, AAA+ region. ATP is bound by residues G184, G186, K187, and T188. The segment at 361-480 (SFEPQLSIER…IELLKRLINE (120 aa)) is domain IV, binds dsDNA.

The protein belongs to the DnaA family. As to quaternary structure, oligomerizes as a right-handed, spiral filament on DNA at oriC.

Its subcellular location is the cytoplasm. In terms of biological role, plays an essential role in the initiation and regulation of chromosomal replication. ATP-DnaA binds to the origin of replication (oriC) to initiate formation of the DNA replication initiation complex once per cell cycle. Binds the DnaA box (a 9 base pair repeat at the origin) and separates the double-stranded (ds)DNA. Forms a right-handed helical filament on oriC DNA; dsDNA binds to the exterior of the filament while single-stranded (ss)DNA is stabiized in the filament's interior. The ATP-DnaA-oriC complex binds and stabilizes one strand of the AT-rich DNA unwinding element (DUE), permitting loading of DNA polymerase. After initiation quickly degrades to an ADP-DnaA complex that is not apt for DNA replication. Binds acidic phospholipids. The sequence is that of Chromosomal replication initiator protein DnaA from Rhizobium meliloti (strain 1021) (Ensifer meliloti).